Consider the following 266-residue polypeptide: Probable carboxylesterase Os04g0669500 (266 aa).

Active-site charge relay system residues include Ser-154, Asp-208, and His-240.

Belongs to the AB hydrolase superfamily. AB hydrolase 2 family.

Functionally, possesses carboxylesterase activity in vitro. The protein is Probable carboxylesterase Os04g0669500 of Oryza sativa subsp. japonica (Rice).